The chain runs to 197 residues: Cytochrome c biogenesis ATP-binding export protein CcmA (197 aa).

Positions 1–196 constitute an ABC transporter domain; sequence MSMLSLHQLQ…VIKSAQILQL (196 aa). ATP is bound at residue 35 to 42; sequence GANGSGKS.

It belongs to the ABC transporter superfamily. CcmA exporter (TC 3.A.1.107) family. In terms of assembly, the complex is composed of two ATP-binding proteins (CcmA) and two transmembrane proteins (CcmB).

The protein localises to the cell inner membrane. The enzyme catalyses heme b(in) + ATP + H2O = heme b(out) + ADP + phosphate + H(+). In terms of biological role, part of the ABC transporter complex CcmAB involved in the biogenesis of c-type cytochromes; once thought to export heme, this seems not to be the case, but its exact role is uncertain. Responsible for energy coupling to the transport system. This is Cytochrome c biogenesis ATP-binding export protein CcmA from Rickettsia typhi (strain ATCC VR-144 / Wilmington).